We begin with the raw amino-acid sequence, 454 residues long: Bifunctional protein GlmU (454 aa).

The segment at 1–226 (MSLEIVILAA…AMEVQGVNDR (226 aa)) is pyrophosphorylase. Residues 8–11 (LAAG), K22, Q73, 78–79 (GT), 99–101 (YGD), G136, E151, N166, and N224 contribute to the UDP-N-acetyl-alpha-D-glucosamine site. Position 101 (D101) interacts with Mg(2+). Mg(2+) is bound at residue N224. Residues 227–247 (MQQAQLERHYQRLRAEELMRQ) form a linker region. The N-acetyltransferase stretch occupies residues 248 to 454 (GVTLLDPQRL…NWKRPEKIKK (207 aa)). Positions 330 and 348 each coordinate UDP-N-acetyl-alpha-D-glucosamine. Residue H360 is the Proton acceptor of the active site. Residues Y363 and N374 each contribute to the UDP-N-acetyl-alpha-D-glucosamine site. Residues A377, 383–384 (NY), S402, A420, and R437 contribute to the acetyl-CoA site.

The protein in the N-terminal section; belongs to the N-acetylglucosamine-1-phosphate uridyltransferase family. In the C-terminal section; belongs to the transferase hexapeptide repeat family. As to quaternary structure, homotrimer. Mg(2+) serves as cofactor.

The protein localises to the cytoplasm. The catalysed reaction is alpha-D-glucosamine 1-phosphate + acetyl-CoA = N-acetyl-alpha-D-glucosamine 1-phosphate + CoA + H(+). The enzyme catalyses N-acetyl-alpha-D-glucosamine 1-phosphate + UTP + H(+) = UDP-N-acetyl-alpha-D-glucosamine + diphosphate. It participates in nucleotide-sugar biosynthesis; UDP-N-acetyl-alpha-D-glucosamine biosynthesis; N-acetyl-alpha-D-glucosamine 1-phosphate from alpha-D-glucosamine 6-phosphate (route II): step 2/2. The protein operates within nucleotide-sugar biosynthesis; UDP-N-acetyl-alpha-D-glucosamine biosynthesis; UDP-N-acetyl-alpha-D-glucosamine from N-acetyl-alpha-D-glucosamine 1-phosphate: step 1/1. It functions in the pathway bacterial outer membrane biogenesis; LPS lipid A biosynthesis. In terms of biological role, catalyzes the last two sequential reactions in the de novo biosynthetic pathway for UDP-N-acetylglucosamine (UDP-GlcNAc). The C-terminal domain catalyzes the transfer of acetyl group from acetyl coenzyme A to glucosamine-1-phosphate (GlcN-1-P) to produce N-acetylglucosamine-1-phosphate (GlcNAc-1-P), which is converted into UDP-GlcNAc by the transfer of uridine 5-monophosphate (from uridine 5-triphosphate), a reaction catalyzed by the N-terminal domain. This chain is Bifunctional protein GlmU, found in Pseudomonas aeruginosa (strain LESB58).